A 414-amino-acid chain; its full sequence is Gamma-glutamyl phosphate reductase (414 aa).

This sequence belongs to the gamma-glutamyl phosphate reductase family.

It localises to the cytoplasm. It carries out the reaction L-glutamate 5-semialdehyde + phosphate + NADP(+) = L-glutamyl 5-phosphate + NADPH + H(+). The protein operates within amino-acid biosynthesis; L-proline biosynthesis; L-glutamate 5-semialdehyde from L-glutamate: step 2/2. Its function is as follows. Catalyzes the NADPH-dependent reduction of L-glutamate 5-phosphate into L-glutamate 5-semialdehyde and phosphate. The product spontaneously undergoes cyclization to form 1-pyrroline-5-carboxylate. This Clostridium botulinum (strain Eklund 17B / Type B) protein is Gamma-glutamyl phosphate reductase.